The primary structure comprises 388 residues: Mannitol-1-phosphate 5-dehydrogenase (388 aa).

5–16 (AIQFGGGNIGRG) contributes to the NAD(+) binding site. Lysine 213 is an active-site residue.

The protein belongs to the mannitol dehydrogenase family. Monomer.

It carries out the reaction D-mannitol 1-phosphate + NAD(+) = beta-D-fructose 6-phosphate + NADH + H(+). In terms of biological role, catalyzes the NAD(H)-dependent interconversion of D-fructose 6-phosphate and D-mannitol 1-phosphate in the mannitol metabolic pathway. This chain is Mannitol-1-phosphate 5-dehydrogenase (mpdA), found in Aspergillus fumigatus (strain CBS 144.89 / FGSC A1163 / CEA10) (Neosartorya fumigata).